We begin with the raw amino-acid sequence, 482 residues long: Alanine aminotransferase 2 (482 aa).

An N6-(pyridoxal phosphate)lysine modification is found at Lys299.

The protein belongs to the class-I pyridoxal-phosphate-dependent aminotransferase family. Alanine aminotransferase subfamily. As to quaternary structure, homodimer. The cofactor is pyridoxal 5'-phosphate.

It catalyses the reaction L-alanine + 2-oxoglutarate = pyruvate + L-glutamate. Its pathway is photosynthesis; C4 acid pathway. It participates in amino-acid degradation; L-alanine degradation via transaminase pathway; pyruvate from L-alanine: step 1/1. Its function is as follows. Transfer of C3 units between the cytosol of mesophyll and bundle sheath cells to maintain a nitrogen-carbon balance in the C4-dicarboxylic pathway. In Hordeum vulgare (Barley), this protein is Alanine aminotransferase 2.